The sequence spans 455 residues: Glutamyl-tRNA reductase (455 aa).

Residues 49–52, serine 109, 114–116, and glutamine 120 each bind substrate; these read TCNR and EAQ. Cysteine 50 (nucleophile) is an active-site residue. Residue 190 to 195 coordinates NADP(+); the sequence is GAGAMG.

The protein belongs to the glutamyl-tRNA reductase family. Homodimer.

It carries out the reaction (S)-4-amino-5-oxopentanoate + tRNA(Glu) + NADP(+) = L-glutamyl-tRNA(Glu) + NADPH + H(+). It participates in porphyrin-containing compound metabolism; protoporphyrin-IX biosynthesis; 5-aminolevulinate from L-glutamyl-tRNA(Glu): step 1/2. Catalyzes the NADPH-dependent reduction of glutamyl-tRNA(Glu) to glutamate 1-semialdehyde (GSA). This is Glutamyl-tRNA reductase from Salinispora tropica (strain ATCC BAA-916 / DSM 44818 / JCM 13857 / NBRC 105044 / CNB-440).